Consider the following 348-residue polypeptide: Uroporphyrinogen decarboxylase (348 aa).

Substrate-binding positions include 27–31 (RQAGR), Phe-46, Asp-76, Tyr-152, Ser-207, and His-320.

This sequence belongs to the uroporphyrinogen decarboxylase family. Homodimer.

The protein localises to the cytoplasm. It catalyses the reaction uroporphyrinogen III + 4 H(+) = coproporphyrinogen III + 4 CO2. Its pathway is porphyrin-containing compound metabolism; protoporphyrin-IX biosynthesis; coproporphyrinogen-III from 5-aminolevulinate: step 4/4. Its function is as follows. Catalyzes the decarboxylation of four acetate groups of uroporphyrinogen-III to yield coproporphyrinogen-III. The protein is Uroporphyrinogen decarboxylase of Bacillus cereus (strain AH820).